The following is a 77-amino-acid chain: Small ribosomal subunit protein bS21 (77 aa).

The span at 38–52 (KPSEKRAREKAEAVR) shows a compositional bias: basic and acidic residues. A disordered region spans residues 38-77 (KPSEKRAREKAEAVRRTRKLARKRAQREGLISNGRGSPLK). Basic residues predominate over residues 53–62 (RTRKLARKRA).

It belongs to the bacterial ribosomal protein bS21 family.

The polypeptide is Small ribosomal subunit protein bS21 (Bartonella henselae (strain ATCC 49882 / DSM 28221 / CCUG 30454 / Houston 1) (Rochalimaea henselae)).